Here is a 279-residue protein sequence, read N- to C-terminus: MTKADTIFKENIERILKEGVFSEQARPKYKDGTVANSKYVTGAFSEYDLSKGEFPITTLRPIAIKSAIKEVLWIYQDQSNSLEVLNDKYNVHYWNDWEVGDTGTIGERYGAVVKKHDIINKLLKQLETNPWNRRNIISLWDYQAFEETDGLLPCAFQTMFDVRRVDGEIYLDATLTQRSNDMLVAHHINAMQYVALQMMIAKHFGWKVGKFFYFINNLHIYDNQFEQAQELLRREPSNCQPRLVLNVPDGTNFFDIKAEDFELVDYDPVKPQLKFDLAI.

A dUMP-binding site is contributed by 133–134; the sequence is RR. Cys-154 serves as the catalytic Nucleophile. DUMP is bound by residues 178–181, Asn-189, and 219–221; these read RSND and HIY. Asp-181 lines the (6R)-5,10-methylene-5,6,7,8-tetrahydrofolate pocket. Ala-278 is a binding site for (6R)-5,10-methylene-5,6,7,8-tetrahydrofolate.

Belongs to the thymidylate synthase family. Bacterial-type ThyA subfamily. Homodimer.

The protein localises to the cytoplasm. It catalyses the reaction dUMP + (6R)-5,10-methylene-5,6,7,8-tetrahydrofolate = 7,8-dihydrofolate + dTMP. The protein operates within pyrimidine metabolism; dTTP biosynthesis. Its function is as follows. Catalyzes the reductive methylation of 2'-deoxyuridine-5'-monophosphate (dUMP) to 2'-deoxythymidine-5'-monophosphate (dTMP) while utilizing 5,10-methylenetetrahydrofolate (mTHF) as the methyl donor and reductant in the reaction, yielding dihydrofolate (DHF) as a by-product. This enzymatic reaction provides an intracellular de novo source of dTMP, an essential precursor for DNA biosynthesis. The polypeptide is Thymidylate synthase (Streptococcus pneumoniae (strain 70585)).